We begin with the raw amino-acid sequence, 405 residues long: FK506-binding protein 4 (405 aa).

Disordered regions lie at residues 49–117 (THNP…EDEL) and 164–297 (QQDE…PQKK). 3 stretches are compositionally biased toward acidic residues: residues 59-84 (ESDD…EMEV), 98-117 (VEEE…EDEL), and 165-201 (QDED…EEEA). Basic and acidic residues-rich tracts occupy residues 238–252 (RKAE…EDAA) and 265–276 (AKVEGEKAEEKP). The PPIase FKBP-type domain maps to 319-405 (GKRLGMRYIG…KFDVKLVSIN (87 aa)).

Belongs to the FKBP-type PPIase family. FKBP3/4 subfamily. Binds to histones H3 and H4.

The protein resides in the nucleus. It catalyses the reaction [protein]-peptidylproline (omega=180) = [protein]-peptidylproline (omega=0). Inhibited by both FK506 and rapamycin. Functionally, PPIase that acts as a histone chaperone. Histone proline isomerase that increases the rate of cis-trans isomerization at prolines on the histone H3 N-terminal tail. Proline isomerization influences H3 methylation thereby regulating gene expression. The protein is FK506-binding protein 4 (FPR4) of Cryptococcus neoformans var. neoformans serotype D (strain B-3501A) (Filobasidiella neoformans).